The following is a 479-amino-acid chain: Anaerobic nitric oxide reductase flavorubredoxin (479 aa).

Residues 30–210 (LRGSSYNSYL…PFSRLVTPKI (181 aa)) are zinc metallo-hydrolase. Fe cation contacts are provided by H79, E81, D83, H147, D166, and H227. The Flavodoxin-like domain occupies 254 to 393 (ITIFYDTMSN…LCREHGREIA (140 aa)). FMN contacts are provided by residues 260-264 (TMSNN) and 342-369 (AFGS…EMSL). A Rubredoxin-like domain is found at 423 to 474 (GPRMQCSVCQWIYDPAKGEPMQDVAPGTPWSEVPDNFLCPECSLGKDVFDEL). Fe cation is bound by residues C428, C431, C461, and C464.

This sequence in the N-terminal section; belongs to the zinc metallo-hydrolase group 3 family. As to quaternary structure, homotetramer. Fe cation serves as cofactor. It depends on FMN as a cofactor.

The protein localises to the cytoplasm. Its pathway is nitrogen metabolism; nitric oxide reduction. In terms of biological role, anaerobic nitric oxide reductase; uses NADH to detoxify nitric oxide (NO), protecting several 4Fe-4S NO-sensitive enzymes. Has at least 2 reductase partners, only one of which (NorW, flavorubredoxin reductase) has been identified. NO probably binds to the di-iron center; electrons enter from the NorW at rubredoxin and are transferred sequentially to the FMN center and the di-iron center. Also able to function as an aerobic oxygen reductase. This Shigella sonnei (strain Ss046) protein is Anaerobic nitric oxide reductase flavorubredoxin.